A 364-amino-acid polypeptide reads, in one-letter code: 3-isopropylmalate dehydrogenase (364 aa).

Position 79-92 (glycine 79–glutamate 92) interacts with NAD(+). Residues arginine 100, arginine 110, arginine 139, and aspartate 227 each coordinate substrate. 3 residues coordinate Mg(2+): aspartate 227, aspartate 251, and aspartate 255. Position 285–297 (glycine 285–asparagine 297) interacts with NAD(+).

It belongs to the isocitrate and isopropylmalate dehydrogenases family. LeuB type 1 subfamily. As to quaternary structure, homodimer. Mg(2+) serves as cofactor. It depends on Mn(2+) as a cofactor.

It localises to the cytoplasm. It catalyses the reaction (2R,3S)-3-isopropylmalate + NAD(+) = 4-methyl-2-oxopentanoate + CO2 + NADH. It participates in amino-acid biosynthesis; L-leucine biosynthesis; L-leucine from 3-methyl-2-oxobutanoate: step 3/4. Its function is as follows. Catalyzes the oxidation of 3-carboxy-2-hydroxy-4-methylpentanoate (3-isopropylmalate) to 3-carboxy-4-methyl-2-oxopentanoate. The product decarboxylates to 4-methyl-2 oxopentanoate. The polypeptide is 3-isopropylmalate dehydrogenase (Buchnera aphidicola subsp. Thelaxes suberi).